Here is a 201-residue protein sequence, read N- to C-terminus: Peptidyl-tRNA hydrolase (201 aa).

Tyrosine 17 contributes to the tRNA binding site. Catalysis depends on histidine 22, which acts as the Proton acceptor. 3 residues coordinate tRNA: phenylalanine 76, asparagine 78, and asparagine 124.

The protein belongs to the PTH family. As to quaternary structure, monomer.

The protein localises to the cytoplasm. The catalysed reaction is an N-acyl-L-alpha-aminoacyl-tRNA + H2O = an N-acyl-L-amino acid + a tRNA + H(+). Hydrolyzes ribosome-free peptidyl-tRNAs (with 1 or more amino acids incorporated), which drop off the ribosome during protein synthesis, or as a result of ribosome stalling. Its function is as follows. Catalyzes the release of premature peptidyl moieties from peptidyl-tRNA molecules trapped in stalled 50S ribosomal subunits, and thus maintains levels of free tRNAs and 50S ribosomes. In Oleidesulfovibrio alaskensis (strain ATCC BAA-1058 / DSM 17464 / G20) (Desulfovibrio alaskensis), this protein is Peptidyl-tRNA hydrolase.